The primary structure comprises 574 residues: MANAPHGGVLKDLLVRDAPIAAQLRQEADTLPEIVLTERQLCDLELIINGGFSPLQGFMNQTDYNGCLDNMRLADGNLFPMPITLDVDEQQIEALKIQQGARIALRDPRDDNAIAIITVTDVYAVDKVREATAVFGSDDLAHPAITYLHKSVKNFYVGGDVQAVSKPAYYDYVALRYTPAELRQHFAKISWRKVVAFQTRNPMHRAHRELTVRAARQRQANVLIHPVVGMTKPGDVDHYTRVRVYQSLMPRYPNGMATLALLPLAMRMGGPREALWHAIIRKNFGVTHFIVGRDHAGPGKDSSGKDFYGPYDAQTLVTKYTEELGIEMVPFQQMTYIPSTDEYQPVDEVTPGTQTMDISGTELRRRLRTGAAIPDWFSYESVVKTLRESYPPKAKQGFTLFLTGLHNSGKDQIARALQVKLNEQGGRSVSLLLGETVRSELSSELGFSPDDRQKNIQRISFVAAELTRAGAAVIAAPIAPYEKSRATARDIITKTGGAGNFFLIHVATPLEYCEATDRKGNYAKARAGQIKGFTGVDDVYEEPTDADLVVDISRQSVAEITHSIILLLEAQSLI.

The tract at residues 1 to 170 (MANAPHGGVL…VQAVSKPAYY (170 aa)) is N-terminal. The segment at 171–395 (DYVALRYTPA…LRESYPPKAK (225 aa)) is catalytic. Gln198 serves as a coordination point for sulfate. Residues 198–201 (QTRN) and 292–295 (GRDH) each bind ATP. Active-site residues include Thr199, Arg200, and Asn201. A sulfate-binding site is contributed by Arg200. Ala296 provides a ligand contact to sulfate. Residue Met334 participates in ATP binding. The interval 396–574 (QGFTLFLTGL…ILLLEAQSLI (179 aa)) is allosteric regulation domain; adenylyl-sulfate kinase-like. 3'-phosphoadenylyl sulfate is bound by residues 435–438 (ETVR), Arg452, 478–479 (IA), and Lys519.

It in the N-terminal section; belongs to the sulfate adenylyltransferase family. In the C-terminal section; belongs to the APS kinase family. As to quaternary structure, homohexamer. Dimer of trimers.

It localises to the cytoplasm. The enzyme catalyses sulfate + ATP + H(+) = adenosine 5'-phosphosulfate + diphosphate. It participates in sulfur metabolism; hydrogen sulfide biosynthesis; sulfite from sulfate: step 1/3. Allosterically inhibited by 3'-phosphoadenosine 5'-phosphosulfate (PAPS). In terms of biological role, catalyzes the first intracellular reaction of sulfate assimilation, forming adenosine-5'-phosphosulfate (APS) from inorganic sulfate and ATP. Plays an important role in sulfate activation as a component of the biosynthesis pathway of sulfur-containing amino acids. In Mycosarcoma maydis (Corn smut fungus), this protein is Sulfate adenylyltransferase.